A 469-amino-acid polypeptide reads, in one-letter code: MRHKRSTKRVKRASATQLYRTCKAAGTCPPDVIPKVEGNTVADQILKYGSMAVFFGGLGIGSGSGTGGRSGYVPLGTTPPTAATNIPIRPPVTVESIPLDTIGPLDSSIVSLVEETSFIESGAPVVTPRVPPTTGFTITTSTDTTPAILDVTSISTHDNPTFTDPSVLHPPTPAETSGHFVLSSSSISTHNYEEIPMDTFIVSTDSNNITNSTPIPGSRPTTRLGLYSKGTQQVKVVDPAFMTSPAKLITYDNPAYEGLNPDTTLQFEHEDISLAPDPDFMDIIALHRPALTSRKGTIRYSRVGNKRTMHTRSGKAIGARVHYYQDLSSITEDIELQPLQHVPSSLPHTTVSTSLNDGMFDIYAPIDTEEDIIFSASSNNTLYTTSNTAYVPSNTTIPLSSGYDIPITAGPDIVFNSNTITNTVLPVPTGPIYSIIADGGDFYLHPSYYLLKRRRKRIPYFFADVSVAV.

The short motif at 1-13 (MRHKRSTKRVKRA) is the Nuclear localization signal element. Cysteines 22 and 28 form a disulfide. The Nuclear localization signal signature appears at 450 to 458 (LLKRRRKRI).

The protein belongs to the papillomaviridae L2 protein family. Interacts with major capsid protein L1. Interacts with E2; this interaction inhibits E2 transcriptional activity but not the DNA replication function E2. Interacts with host GADD45GIP1. Interacts with host HSPA8; this interaction is required for L2 nuclear translocation. Interacts with host importins KPNB2 and KPNB3. Forms a complex with importin alpha2-beta1 heterodimers via interaction with the importin alpha2 adapter. Interacts with host DYNLT1; this interaction is essential for virus intracellular transport during entry. Interacts (via C-terminus) with host retromer subunits VPS35 and VPS29. Post-translationally, highly phosphorylated.

It is found in the virion. The protein resides in the host nucleus. The protein localises to the host early endosome. Its subcellular location is the host Golgi apparatus. In terms of biological role, minor protein of the capsid that localizes along the inner surface of the virion, within the central cavities beneath the L1 pentamers. Plays a role in capsid stabilization through interaction with the major capsid protein L1. Once the virion enters the host cell, L2 escorts the genomic DNA into the nucleus by promoting escape from the endosomal compartments and traffic through the host Golgi network. Mechanistically, the C-terminus of L2 possesses a cell-penetrating peptide that protudes from the host endosome, interacts with host cytoplasmic retromer cargo and thereby mediates the capsid delivery to the host trans-Golgi network. Plays a role through its interaction with host dynein in the intracellular microtubule-dependent transport of viral capsid toward the nucleus. Mediates the viral genome import into the nucleus through binding to host importins. Once within the nucleus, L2 localizes viral genomes to host PML bodies in order to activate early gene expression for establishment of infection. Later on, promotes late gene expression by interacting with the viral E2 protein and by inhibiting its transcriptional activation functions. During virion assembly, encapsidates the genome by direct interaction with the viral DNA. This Human papillomavirus 35 protein is Minor capsid protein L2.